Reading from the N-terminus, the 87-residue chain is Protein ORF3 (87 aa).

Residues 58–87 (GALNNAPREPSAPPLSQTLSPRQVLARYQM) form a disordered region. A PTAP/PSAP motif motif is present at residues 67 to 70 (PSAP).

This sequence belongs to the hepevirus ORF3 protein family. In terms of processing, palmitoylated in the N-terminus.

It localises to the host endoplasmic reticulum membrane. It is found in the host cytoplasm. Its subcellular location is the host cytoskeleton. The protein resides in the virion. The protein localises to the host cell membrane. Functionally, small multifunctional phosphoprotein involved in virion morphogenesis, egress and counteracting host innate immunity. In Avian hepatitis E virus (isolate Chicken/California/Meng) (AHEV), this protein is Protein ORF3.